A 332-amino-acid polypeptide reads, in one-letter code: Glycerol-3-phosphate dehydrogenase [NAD(P)+] (332 aa).

Positions 11, 12, 32, and 106 each coordinate NADPH. Positions 106, 134, and 136 each coordinate sn-glycerol 3-phosphate. A138 serves as a coordination point for NADPH. Residues K189, D242, S252, R253, and N254 each coordinate sn-glycerol 3-phosphate. The active-site Proton acceptor is K189. Position 253 (R253) interacts with NADPH. The NADPH site is built by V277 and E279.

The protein belongs to the NAD-dependent glycerol-3-phosphate dehydrogenase family.

The protein localises to the cytoplasm. The enzyme catalyses sn-glycerol 3-phosphate + NAD(+) = dihydroxyacetone phosphate + NADH + H(+). It carries out the reaction sn-glycerol 3-phosphate + NADP(+) = dihydroxyacetone phosphate + NADPH + H(+). It functions in the pathway membrane lipid metabolism; glycerophospholipid metabolism. Catalyzes the reduction of the glycolytic intermediate dihydroxyacetone phosphate (DHAP) to sn-glycerol 3-phosphate (G3P), the key precursor for phospholipid synthesis. The sequence is that of Glycerol-3-phosphate dehydrogenase [NAD(P)+] from Clostridium acetobutylicum (strain ATCC 824 / DSM 792 / JCM 1419 / IAM 19013 / LMG 5710 / NBRC 13948 / NRRL B-527 / VKM B-1787 / 2291 / W).